A 377-amino-acid chain; its full sequence is Molybdenum import ATP-binding protein ModC (377 aa).

Residues 4–240 (IAPRSIRGEF…PALPLATARD (237 aa)) form the ABC transporter domain. Residue 38-45 (GPSGCGKS) participates in ATP binding. In terms of domain architecture, Mop spans 299–369 (RTSILNILPA…IKGVALAPER (71 aa)).

This sequence belongs to the ABC transporter superfamily. Molybdate importer (TC 3.A.1.8) family. The complex is composed of two ATP-binding proteins (ModC), two transmembrane proteins (ModB) and a solute-binding protein (ModA).

Its subcellular location is the cell inner membrane. It catalyses the reaction molybdate(out) + ATP + H2O = molybdate(in) + ADP + phosphate + H(+). Its function is as follows. Part of the ABC transporter complex ModABC involved in molybdenum import. Responsible for energy coupling to the transport system. This Rhodopseudomonas palustris (strain HaA2) protein is Molybdenum import ATP-binding protein ModC.